Consider the following 79-residue polypeptide: Small ribosomal subunit protein bS18 (79 aa).

Belongs to the bacterial ribosomal protein bS18 family. In terms of assembly, part of the 30S ribosomal subunit. Forms a tight heterodimer with protein bS6.

In terms of biological role, binds as a heterodimer with protein bS6 to the central domain of the 16S rRNA, where it helps stabilize the platform of the 30S subunit. This is Small ribosomal subunit protein bS18 from Streptococcus pneumoniae serotype 19F (strain G54).